The following is a 780-amino-acid chain: Acyl-CoA dehydrogenase family member 11 (780 aa).

Residue Lys177 is modified to N6-acetyllysine. At Tyr324 the chain carries Phosphotyrosine. At Lys391 the chain carries N6-succinyllysine. FAD contacts are provided by residues 504–514 (FCMTEPDVASS) and 538–540 (WSS). Ser514 provides a ligand contact to substrate. Residue 629–632 (GPGR) coordinates substrate. FAD-binding positions include Arg657, Gln727, and 727–731 (QVCGG). Substrate is bound at residue Gly755. 756–758 (PDE) contacts FAD.

It belongs to the acyl-CoA dehydrogenase family. Homodimer. FAD is required as a cofactor. Widely expressed with highest levels in brain followed by liver, heart and kidney.

It is found in the peroxisome. The protein localises to the mitochondrion membrane. It carries out the reaction a 2,3-saturated acyl-CoA + oxidized [electron-transfer flavoprotein] + H(+) = a (2E)-enoyl-CoA + reduced [electron-transfer flavoprotein]. The enzyme catalyses docosanoyl-CoA + oxidized [electron-transfer flavoprotein] + H(+) = (2E)-docosenoyl-CoA + reduced [electron-transfer flavoprotein]. It catalyses the reaction tetracosanoyl-CoA + oxidized [electron-transfer flavoprotein] + H(+) = (2E)-tetracosenoyl-CoA + reduced [electron-transfer flavoprotein]. The catalysed reaction is eicosanoyl-CoA + oxidized [electron-transfer flavoprotein] + H(+) = (2E)-eicosenoyl-CoA + reduced [electron-transfer flavoprotein]. It carries out the reaction hexacosanoyl-CoA + oxidized [electron-transfer flavoprotein] + H(+) = (2E)-hexacosenoyl-CoA + reduced [electron-transfer flavoprotein]. The enzyme catalyses tricosanoyl-CoA + oxidized [electron-transfer flavoprotein] + H(+) = (2E)-tricosenoyl-CoA + reduced [electron-transfer flavoprotein]. Its pathway is lipid metabolism; fatty acid beta-oxidation. Functionally, acyl-CoA dehydrogenase, that exhibits maximal activity towards saturated C22-CoA. Probably participates in beta-oxydation and energy production but could also play a role in the metabolism of specific fatty acids to control fatty acids composition of cellular lipids in brain. This is Acyl-CoA dehydrogenase family member 11 (ACAD11) from Homo sapiens (Human).